The primary structure comprises 507 residues: Maturase K (507 aa).

Belongs to the intron maturase 2 family. MatK subfamily.

The protein resides in the plastid. The protein localises to the chloroplast. Functionally, usually encoded in the trnK tRNA gene intron. Probably assists in splicing its own and other chloroplast group II introns. This is Maturase K from Kalmia procumbens (Alpine azalea).